We begin with the raw amino-acid sequence, 166 residues long: Large ribosomal subunit protein uL11x (166 aa).

This sequence belongs to the universal ribosomal protein uL11 family.

In terms of biological role, binds directly to 26S ribosomal RNA. The chain is Large ribosomal subunit protein uL11x (RPL12C) from Arabidopsis thaliana (Mouse-ear cress).